A 236-amino-acid chain; its full sequence is Terpene cyclase andB (236 aa).

A run of 7 helical transmembrane segments spans residues threonine 13–methionine 33, methionine 45–proline 65, valine 70–isoleucine 90, histidine 106–isoleucine 126, phenylalanine 135–leucine 155, valine 166–tryptophan 186, and leucine 200–tyrosine 220.

Belongs to the paxB family.

Its subcellular location is the membrane. The protein operates within secondary metabolite biosynthesis; terpenoid biosynthesis. Functionally, terpene cyclase; part of the gene cluster that mediates the biosynthesis of anditomin, a fungal meroterpenoid. The first step of the pathway is the synthesis of 3,5-dimethylorsellinic acid (DMOA) by the polyketide synthase andM. DMOA is then converted to the phthalide compound 5,7-dihydroxy-4,6-dimethylphthalide (DHDMP) by the cytochrome P450 monooxygenase andK, which is further prenylated by the prenyltransferase andD to yield farnesyl-DHDMP. Further epoxidation by the FAD-dependent monooxygenase andE leads to epoxyfarnesyl-DHDMP. The next step involves the terpene cyclase andB that converts epoxyfarnesyl-DHDMP into preandiloid A through opening of the epoxide ring followed by the cyclization of the farnesyl moiety. Preandiloid A is in turn oxidized at the C-3 hydroxyl group to yield preandiloid B by the dehydrogenase andC. The dioxygenase andA is solely responsible for the dehydrogenation of preandiloid B leading to the enone preandiloid C, as well as for the intriguing structural rearrangement to generate the bicyclo[2.2.2]octane core, transforming preandiloid C into andiconin. FAD-binding monooxygenase andJ then produces andilesin D which is reduced by dehydrogenase andI to yield andilesin A. Action of acetyltransferase andG followed by a spontaneous acetate elimination leads then to andilesin B, which is in turn substrate of the short chain dehydrogenase andH to yield andilesin C. Finally, the dioxygenase andF catalyzes the transformation of andilesin C to anditomin. The chain is Terpene cyclase andB from Emericella variicolor (Aspergillus stellatus).